A 187-amino-acid polypeptide reads, in one-letter code: RNA pyrophosphohydrolase (187 aa).

One can recognise a Nudix hydrolase domain in the interval 6–149; that stretch reads GYRANVGIIL…KRQVYRQALT (144 aa). The short motif at 38–59 is the Nudix box element; that stretch reads GGIKSGETPTEAMYRELAEETG. Residues 166 to 187 form a disordered region; that stretch reads AYREPLEPVEKNRKKSSDTRQS.

This sequence belongs to the Nudix hydrolase family. RppH subfamily. The cofactor is a divalent metal cation.

Functionally, accelerates the degradation of transcripts by removing pyrophosphate from the 5'-end of triphosphorylated RNA, leading to a more labile monophosphorylated state that can stimulate subsequent ribonuclease cleavage. The polypeptide is RNA pyrophosphohydrolase (Nitrosomonas europaea (strain ATCC 19718 / CIP 103999 / KCTC 2705 / NBRC 14298)).